Consider the following 67-residue polypeptide: Alpha-actitoxin-Ms11a-3 (67 aa).

The signal sequence occupies residues 1 to 24 (MASKIFFVLAVFLVMSAVLPESFA). 3 disulfides stabilise this stretch: C26–C41, C33–C46, and C40–C61. The residue at position 66 (K66) is a Lysine amide.

Its subcellular location is the secreted. It localises to the nematocyst. Its function is as follows. Alpha-toxins act on postsynaptic membranes, they bind to the nicotinic acetylcholine receptors (nAChR) and thus inhibit them. This toxin shows inhibition against mouse alpha-1-beta-1-delta-epsilon (CHRNA1-CHRNB1-CHRND-CHRNE) (IC(50)=1215 nM), rat alpha-3-beta-4/CHRNA3-CHRNB4 (IC(50)=5.173 uM), rat alpha-7/CHRNA7 (IC(50)=4.786 uM), human alpha-7/CHRNA7 (IC(50)=8.869 uM), and rat alpha-9-alpha-10/CHRNA9-CHRNA10 (IC(50)=202 nM). Also competes with alpha-bungarotoxin for binding to orthosteric sites on muscle-type T.carlifornicus (IC(50)=256 nM) and human alpha-7/CHRNA7 nAChRs (IC(50)=19.81 uM). The chain is Alpha-actitoxin-Ms11a-3 from Metridium senile (Brown sea anemone).